A 276-amino-acid polypeptide reads, in one-letter code: Elongation factor Ts (276 aa).

The segment at 76 to 79 (TDFV) is involved in Mg(2+) ion dislocation from EF-Tu.

This sequence belongs to the EF-Ts family.

Its subcellular location is the cytoplasm. In terms of biological role, associates with the EF-Tu.GDP complex and induces the exchange of GDP to GTP. It remains bound to the aminoacyl-tRNA.EF-Tu.GTP complex up to the GTP hydrolysis stage on the ribosome. This is Elongation factor Ts from Mycobacterium leprae (strain Br4923).